A 412-amino-acid polypeptide reads, in one-letter code: Argininosuccinate synthase (412 aa).

ATP is bound by residues 24–32 (AFSGGLDTS) and Ala50. The L-citrulline site is built by Tyr103 and Ser108. Gly132 contacts ATP. Positions 134, 138, and 139 each coordinate L-aspartate. Asn138 serves as a coordination point for L-citrulline. Residue Arg142 coordinates L-citrulline.

This sequence belongs to the argininosuccinate synthase family. Type 1 subfamily. In terms of assembly, homotetramer.

Its subcellular location is the cytoplasm. It carries out the reaction L-citrulline + L-aspartate + ATP = 2-(N(omega)-L-arginino)succinate + AMP + diphosphate + H(+). It functions in the pathway amino-acid biosynthesis; L-arginine biosynthesis; L-arginine from L-ornithine and carbamoyl phosphate: step 2/3. The polypeptide is Argininosuccinate synthase (Xanthomonas axonopodis pv. citri (strain 306)).